A 77-amino-acid polypeptide reads, in one-letter code: UPF0291 protein OB1671 (77 aa).

Positions 56-77 are disordered; sequence DPEGKDVTPQKLRDYQDRNKKH. Positions 57-77 are enriched in basic and acidic residues; sequence PEGKDVTPQKLRDYQDRNKKH.

It belongs to the UPF0291 family.

Its subcellular location is the cytoplasm. In Oceanobacillus iheyensis (strain DSM 14371 / CIP 107618 / JCM 11309 / KCTC 3954 / HTE831), this protein is UPF0291 protein OB1671.